We begin with the raw amino-acid sequence, 601 residues long: Glutamine--fructose-6-phosphate aminotransferase [isomerizing] (601 aa).

Residue cysteine 2 is the Nucleophile; for GATase activity of the active site. Positions 2–216 (CGIVGYIGTN…DKEIVIVTKD (215 aa)) constitute a Glutamine amidotransferase type-2 domain. SIS domains follow at residues 282–421 (IIDE…EIGD) and 453–591 (IAGE…VDKP). Lysine 596 serves as the catalytic For Fru-6P isomerization activity.

As to quaternary structure, homodimer.

The protein localises to the cytoplasm. It catalyses the reaction D-fructose 6-phosphate + L-glutamine = D-glucosamine 6-phosphate + L-glutamate. Its function is as follows. Catalyzes the first step in hexosamine metabolism, converting fructose-6P into glucosamine-6P using glutamine as a nitrogen source. This chain is Glutamine--fructose-6-phosphate aminotransferase [isomerizing], found in Listeria monocytogenes serovar 1/2a (strain ATCC BAA-679 / EGD-e).